The following is a 397-amino-acid chain: Argininosuccinate synthase (397 aa).

9–17 (AYSGGLDTT) is a binding site for ATP. Tyr87 contributes to the L-citrulline binding site. An ATP-binding site is contributed by Gly117. L-aspartate contacts are provided by Thr119, Asn123, and Asp124. Asn123 is a binding site for L-citrulline. L-citrulline-binding residues include Arg127, Ser174, Ser183, Glu259, and Tyr271.

It belongs to the argininosuccinate synthase family. Type 1 subfamily. In terms of assembly, homotetramer.

Its subcellular location is the cytoplasm. The catalysed reaction is L-citrulline + L-aspartate + ATP = 2-(N(omega)-L-arginino)succinate + AMP + diphosphate + H(+). It functions in the pathway amino-acid biosynthesis; L-arginine biosynthesis; L-arginine from L-ornithine and carbamoyl phosphate: step 2/3. The chain is Argininosuccinate synthase from Pyrobaculum aerophilum (strain ATCC 51768 / DSM 7523 / JCM 9630 / CIP 104966 / NBRC 100827 / IM2).